The primary structure comprises 443 residues: UDP-N-acetylglucosamine 1-carboxyvinyltransferase 1 (443 aa).

22–23 (KN) contributes to the phosphoenolpyruvate binding site. Arginine 95 contacts UDP-N-acetyl-alpha-D-glucosamine. Cysteine 119 serves as the catalytic Proton donor. Cysteine 119 bears the 2-(S-cysteinyl)pyruvic acid O-phosphothioketal mark. UDP-N-acetyl-alpha-D-glucosamine contacts are provided by residues 124 to 128 (RPIDL), aspartate 308, and valine 330.

It belongs to the EPSP synthase family. MurA subfamily.

Its subcellular location is the cytoplasm. The enzyme catalyses phosphoenolpyruvate + UDP-N-acetyl-alpha-D-glucosamine = UDP-N-acetyl-3-O-(1-carboxyvinyl)-alpha-D-glucosamine + phosphate. Its pathway is cell wall biogenesis; peptidoglycan biosynthesis. Cell wall formation. Adds enolpyruvyl to UDP-N-acetylglucosamine. The sequence is that of UDP-N-acetylglucosamine 1-carboxyvinyltransferase 1 from Oceanobacillus iheyensis (strain DSM 14371 / CIP 107618 / JCM 11309 / KCTC 3954 / HTE831).